The primary structure comprises 352 residues: N-acetyl-gamma-glutamyl-phosphate reductase (352 aa).

Residue cysteine 155 is part of the active site.

This sequence belongs to the NAGSA dehydrogenase family. Type 1 subfamily.

The protein localises to the cytoplasm. It catalyses the reaction N-acetyl-L-glutamate 5-semialdehyde + phosphate + NADP(+) = N-acetyl-L-glutamyl 5-phosphate + NADPH + H(+). The protein operates within amino-acid biosynthesis; L-arginine biosynthesis; N(2)-acetyl-L-ornithine from L-glutamate: step 3/4. In terms of biological role, catalyzes the NADPH-dependent reduction of N-acetyl-5-glutamyl phosphate to yield N-acetyl-L-glutamate 5-semialdehyde. In Brachyspira hyodysenteriae (strain ATCC 49526 / WA1), this protein is N-acetyl-gamma-glutamyl-phosphate reductase.